A 130-amino-acid polypeptide reads, in one-letter code: Small ribosomal subunit protein uS8A (130 aa).

This sequence belongs to the universal ribosomal protein uS8 family.

This is Small ribosomal subunit protein uS8A (RpS15Aa) from Drosophila melanogaster (Fruit fly).